A 157-amino-acid polypeptide reads, in one-letter code: Transcription elongation factor GreA (157 aa).

Belongs to the GreA/GreB family.

Functionally, necessary for efficient RNA polymerase transcription elongation past template-encoded arresting sites. The arresting sites in DNA have the property of trapping a certain fraction of elongating RNA polymerases that pass through, resulting in locked ternary complexes. Cleavage of the nascent transcript by cleavage factors such as GreA or GreB allows the resumption of elongation from the new 3'terminus. GreA releases sequences of 2 to 3 nucleotides. This is Transcription elongation factor GreA from Chelativorans sp. (strain BNC1).